Consider the following 156-residue polypeptide: Arginine repressor (156 aa).

The protein belongs to the ArgR family.

Its subcellular location is the cytoplasm. Its pathway is amino-acid biosynthesis; L-arginine biosynthesis [regulation]. Regulates arginine biosynthesis genes. The chain is Arginine repressor from Shewanella halifaxensis (strain HAW-EB4).